The primary structure comprises 131 residues: Global transcriptional regulator Spx 1 (131 aa).

A disulfide bond links Cys-10 and Cys-13.

This sequence belongs to the ArsC family. Spx subfamily. As to quaternary structure, interacts with the C-terminal domain of the alpha subunit of the RNAP.

The protein localises to the cytoplasm. In terms of biological role, global transcriptional regulator that plays a key role in stress response and exerts either positive or negative regulation of genes. Acts by interacting with the C-terminal domain of the alpha subunit of the RNA polymerase (RNAP). This interaction can enhance binding of RNAP to the promoter region of target genes and stimulate their transcription, or block interaction of RNAP with activator. This is Global transcriptional regulator Spx 1 from Bacillus anthracis.